Reading from the N-terminus, the 275-residue chain is Large ribosomal subunit protein uL2 (275 aa).

The tract at residues 225–275 (MNPIDHPHGGGEGRTSGGRHPVTPWGKPTKGKKTRSNKKTDRLIMRRRQTQ) is disordered.

This sequence belongs to the universal ribosomal protein uL2 family. In terms of assembly, part of the 50S ribosomal subunit. Forms a bridge to the 30S subunit in the 70S ribosome.

One of the primary rRNA binding proteins. Required for association of the 30S and 50S subunits to form the 70S ribosome, for tRNA binding and peptide bond formation. It has been suggested to have peptidyltransferase activity; this is somewhat controversial. Makes several contacts with the 16S rRNA in the 70S ribosome. The sequence is that of Large ribosomal subunit protein uL2 from Paramagnetospirillum magneticum (strain ATCC 700264 / AMB-1) (Magnetospirillum magneticum).